A 255-amino-acid polypeptide reads, in one-letter code: Cytochrome c oxidase subunit 2 (255 aa).

An N-terminal signal peptide occupies residues 1–16; it reads MFNLFPPFGANTAIFN. The Mitochondrial intermembrane portion of the chain corresponds to 17-43; sequence DAPQPWQVGFQDGASPTQEGITELHDS. A helical membrane pass occupies residues 44 to 64; the sequence is IFFYLVIICFGVLWVLSSVIV. Residues 65–80 lie on the Mitochondrial matrix side of the membrane; sequence NFNSNKSQLVYKYANH. A helical transmembrane segment spans residues 81–101; it reads GTLIELIWTITPALVLIAIAF. Topologically, residues 102 to 255 are mitochondrial intermembrane; that stretch reads PSFKLLYLMD…KYLAWIDSQA (154 aa). Cu cation contacts are provided by histidine 189, cysteine 224, glutamate 226, cysteine 228, histidine 232, and methionine 235. Mg(2+) is bound at residue glutamate 226.

This sequence belongs to the cytochrome c oxidase subunit 2 family. Component of the cytochrome c oxidase (complex IV, CIV), a multisubunit enzyme composed of a catalytic core of 3 subunits and several supernumerary subunits. The complex exists as a monomer or a dimer and forms supercomplexes (SCs) in the inner mitochondrial membrane with ubiquinol-cytochrome c oxidoreductase (cytochrome b-c1 complex, complex III, CIII). Cu cation is required as a cofactor.

Its subcellular location is the mitochondrion inner membrane. The catalysed reaction is 4 Fe(II)-[cytochrome c] + O2 + 8 H(+)(in) = 4 Fe(III)-[cytochrome c] + 2 H2O + 4 H(+)(out). In terms of biological role, component of the cytochrome c oxidase, the last enzyme in the mitochondrial electron transport chain which drives oxidative phosphorylation. The respiratory chain contains 3 multisubunit complexes succinate dehydrogenase (complex II, CII), ubiquinol-cytochrome c oxidoreductase (cytochrome b-c1 complex, complex III, CIII) and cytochrome c oxidase (complex IV, CIV), that cooperate to transfer electrons derived from NADH and succinate to molecular oxygen, creating an electrochemical gradient over the inner membrane that drives transmembrane transport and the ATP synthase. Cytochrome c oxidase is the component of the respiratory chain that catalyzes the reduction of oxygen to water. Electrons originating from reduced cytochrome c in the intermembrane space (IMS) are transferred via the dinuclear copper A center (CU(A)) of subunit 2 and heme A of subunit 1 to the active site in subunit 1, a binuclear center (BNC) formed by heme A3 and copper B (CU(B)). The BNC reduces molecular oxygen to 2 water molecules using 4 electrons from cytochrome c in the IMS and 4 protons from the mitochondrial matrix. This is Cytochrome c oxidase subunit 2 (COX2) from Mycosarcoma maydis (Corn smut fungus).